A 309-amino-acid polypeptide reads, in one-letter code: Tagatose-6-phosphate kinase (309 aa).

Belongs to the carbohydrate kinase PfkB family. LacC subfamily.

The catalysed reaction is D-tagatofuranose 6-phosphate + ATP = D-tagatofuranose 1,6-bisphosphate + ADP + H(+). It participates in carbohydrate metabolism; D-tagatose 6-phosphate degradation; D-glyceraldehyde 3-phosphate and glycerone phosphate from D-tagatose 6-phosphate: step 1/2. This Streptococcus sanguinis (strain SK36) protein is Tagatose-6-phosphate kinase.